The following is a 99-amino-acid chain: Acylphosphatase (99 aa).

Positions 5-97 (VRQIVIRGRV…RPGERFSQLP (93 aa)) constitute an Acylphosphatase-like domain. Catalysis depends on residues arginine 20 and asparagine 38.

Belongs to the acylphosphatase family.

It catalyses the reaction an acyl phosphate + H2O = a carboxylate + phosphate + H(+). In Nitrobacter hamburgensis (strain DSM 10229 / NCIMB 13809 / X14), this protein is Acylphosphatase (acyP).